A 208-amino-acid chain; its full sequence is Small ribosomal subunit protein uS4 (208 aa).

Positions 98–160 constitute an S4 RNA-binding domain; sequence RRLDNVVYRM…SKNNVQIQRA (63 aa).

This sequence belongs to the universal ribosomal protein uS4 family. As to quaternary structure, part of the 30S ribosomal subunit. Contacts protein S5. The interaction surface between S4 and S5 is involved in control of translational fidelity.

In terms of biological role, one of the primary rRNA binding proteins, it binds directly to 16S rRNA where it nucleates assembly of the body of the 30S subunit. Functionally, with S5 and S12 plays an important role in translational accuracy. The protein is Small ribosomal subunit protein uS4 of Nautilia profundicola (strain ATCC BAA-1463 / DSM 18972 / AmH).